The primary structure comprises 421 residues: Synaptotagmin-15 (421 aa).

The Extracellular segment spans residues 1–4 (MAEQ). A helical; Signal-anchor for type III membrane protein transmembrane segment spans residues 5–29 (LALVIGGTIGGLLLLLLIGASCCLW). Topologically, residues 30 to 421 (RRFCATLTYE…WHALCRTTEP (392 aa)) are cytoplasmic. The disordered stretch occupies residues 47 to 68 (MATTAASSGQRDRPCQPHARTQ). C2 domains lie at 147–264 (CLGR…RRVI) and 278–399 (EFGD…EHWD).

The protein belongs to the synaptotagmin family. As to quaternary structure, homodimer.

It is found in the cell membrane. May be involved in the trafficking and exocytosis of secretory vesicles in non-neuronal tissues. This Homo sapiens (Human) protein is Synaptotagmin-15 (SYT15).